The chain runs to 157 residues: Biotin carboxyl carrier protein of acetyl-CoA carboxylase (157 aa).

Positions Tyr80–Glu156 constitute a Biotinyl-binding domain. Residue Lys122 is modified to N6-biotinyllysine.

It localises to the plastid. Its subcellular location is the chloroplast. It participates in lipid metabolism; fatty acid biosynthesis. In terms of biological role, this protein is a component of the acetyl coenzyme A carboxylase complex; first, biotin carboxylase catalyzes the carboxylation of the carrier protein and then the transcarboxylase transfers the carboxyl group to form malonyl-CoA. This chain is Biotin carboxyl carrier protein of acetyl-CoA carboxylase (accB), found in Porphyra purpurea (Red seaweed).